Reading from the N-terminus, the 337-residue chain is Glyceraldehyde-3-phosphate dehydrogenase 3, cytosolic (337 aa).

The interval 1-151 (MAKIKIGING…YKSDINIVSN (151 aa)) is binding to NAD. Residues 13-14 (RI), Asp35, and Arg82 each bind NAD(+). The interval 152-337 (ASCTTNCLAP…DLIRHMNSTK (186 aa)) is catalytic. Residues 153-155 (SCT), Thr184, 213-214 (TG), and Arg236 each bind D-glyceraldehyde 3-phosphate. Residue Cys154 is the Nucleophile of the active site. Asn318 provides a ligand contact to NAD(+).

Belongs to the glyceraldehyde-3-phosphate dehydrogenase family. As to quaternary structure, homotetramer.

It is found in the cytoplasm. It carries out the reaction D-glyceraldehyde 3-phosphate + phosphate + NAD(+) = (2R)-3-phospho-glyceroyl phosphate + NADH + H(+). It functions in the pathway carbohydrate degradation; glycolysis; pyruvate from D-glyceraldehyde 3-phosphate: step 1/5. In terms of biological role, key enzyme in glycolysis that catalyzes the first step of the pathway by converting D-glyceraldehyde 3-phosphate (G3P) into 3-phospho-D-glyceroyl phosphate. Essential for the maintenance of cellular ATP levels and carbohydrate metabolism. This Zea mays (Maize) protein is Glyceraldehyde-3-phosphate dehydrogenase 3, cytosolic (GAPC3).